The primary structure comprises 262 residues: MRFGLNIDHIVTLREIRKTYEPEILEALFIAKNTHKVDLITIHLREDKRHIQNEDVLRLLEISPLPINIECSINAGITDFLCSLKNKPSKVTIVPENRNEVTTEGGLDCSLKGLGEVIRAYHNKGVEVSLFIDPLKDALHFAREHQVKQVEFHTGVYANLHNALYSNANNQIHAISALKDKSPKELKEELHNAFLQLRKMSKEAFFMGITACAGHGLNYSNVKELLKIPSLRELNIGHSVISKAVLVGLEKAILEMAQLIKR.

Asparagine 6 serves as a coordination point for 3-amino-2-oxopropyl phosphate. Residue aspartate 8 to histidine 9 participates in 1-deoxy-D-xylulose 5-phosphate binding. Arginine 17 is a 3-amino-2-oxopropyl phosphate binding site. The active-site Proton acceptor is histidine 43. Arginine 45 and histidine 50 together coordinate 1-deoxy-D-xylulose 5-phosphate. Glutamate 70 functions as the Proton acceptor in the catalytic mechanism. Threonine 102 lines the 1-deoxy-D-xylulose 5-phosphate pocket. Histidine 215 functions as the Proton donor in the catalytic mechanism. Residues glycine 216 and glycine 237–histidine 238 contribute to the 3-amino-2-oxopropyl phosphate site.

The protein belongs to the PNP synthase family. In terms of assembly, homooctamer; tetramer of dimers.

The protein resides in the cytoplasm. The enzyme catalyses 3-amino-2-oxopropyl phosphate + 1-deoxy-D-xylulose 5-phosphate = pyridoxine 5'-phosphate + phosphate + 2 H2O + H(+). The protein operates within cofactor biosynthesis; pyridoxine 5'-phosphate biosynthesis; pyridoxine 5'-phosphate from D-erythrose 4-phosphate: step 5/5. Catalyzes the complicated ring closure reaction between the two acyclic compounds 1-deoxy-D-xylulose-5-phosphate (DXP) and 3-amino-2-oxopropyl phosphate (1-amino-acetone-3-phosphate or AAP) to form pyridoxine 5'-phosphate (PNP) and inorganic phosphate. In Helicobacter pylori (strain Shi470), this protein is Pyridoxine 5'-phosphate synthase.